Here is a 92-residue protein sequence, read N- to C-terminus: Protein S100-A5 (92 aa).

EF-hand domains are found at residues 12–47 and 47–82; these read MVTT…LGEM and MKES…LCMA. 7 residues coordinate Ca(2+): Thr-28, Glu-33, Asp-60, Asn-62, Asp-64, Glu-66, and Glu-71.

It belongs to the S-100 family. As to quaternary structure, homodimer.

Functionally, binds calcium, zinc and copper. One subunit can simultaneously bind 2 calcium ions or 2 copper ions plus 1 zinc ion. Calcium and copper ions compete for the same binding sites. This is Protein S100-A5 (S100A5) from Homo sapiens (Human).